Reading from the N-terminus, the 132-residue chain is Large ribosomal subunit protein uL14 (132 aa).

Belongs to the universal ribosomal protein uL14 family. In terms of assembly, part of the 50S ribosomal subunit. Forms a cluster with proteins L3 and L24e, part of which may contact the 16S rRNA in 2 intersubunit bridges.

Binds to 23S rRNA. Forms part of two intersubunit bridges in the 70S ribosome. In Methanococcus maripaludis (strain C5 / ATCC BAA-1333), this protein is Large ribosomal subunit protein uL14.